The following is a 498-amino-acid chain: Acetyl-coenzyme A carboxylase carboxyl transferase subunit beta, chloroplastic (498 aa).

Residues 36–59 (SVNEDPIINDMDKDIPSGSDSDNS) are disordered. The CoA carboxyltransferase N-terminal domain occupies 231 to 498 (LWVQCENCYG…FFPLNQNSIK (268 aa)). Zn(2+)-binding residues include cysteine 235, cysteine 238, cysteine 254, and cysteine 257. The C4-type zinc finger occupies 235–257 (CENCYGLNYKRFLKSKMNICEHC).

It belongs to the AccD/PCCB family. As to quaternary structure, acetyl-CoA carboxylase is a heterohexamer composed of biotin carboxyl carrier protein, biotin carboxylase and 2 subunits each of ACCase subunit alpha and ACCase plastid-coded subunit beta (accD). It depends on Zn(2+) as a cofactor.

The protein localises to the plastid. The protein resides in the chloroplast stroma. It catalyses the reaction N(6)-carboxybiotinyl-L-lysyl-[protein] + acetyl-CoA = N(6)-biotinyl-L-lysyl-[protein] + malonyl-CoA. It participates in lipid metabolism; malonyl-CoA biosynthesis; malonyl-CoA from acetyl-CoA: step 1/1. Its function is as follows. Component of the acetyl coenzyme A carboxylase (ACC) complex. Biotin carboxylase (BC) catalyzes the carboxylation of biotin on its carrier protein (BCCP) and then the CO(2) group is transferred by the transcarboxylase to acetyl-CoA to form malonyl-CoA. In Morus indica (Mulberry), this protein is Acetyl-coenzyme A carboxylase carboxyl transferase subunit beta, chloroplastic.